Here is a 192-residue protein sequence, read N- to C-terminus: Na(+)-translocating ferredoxin:NAD(+) oxidoreductase complex subunit A (192 aa).

6 consecutive transmembrane segments (helical) span residues 4 to 24 (IFIMISAIFVNNFVLSRFLGI), 38 to 58 (VGMGVAVTFVMALASAITYVV), 71 to 91 (LQTIAFILIIAALVQLVEMII), 101 to 121 (ALGVYLPLITTNCAVLGVALI), 133 to 153 (IFNGVGAALGFTLAIVLFAGI), and 169 to 189 (FPIALLTAGLMAIAFLGFSGM).

The protein belongs to the NqrDE/RnfAE family. The complex is composed of six subunits: RnfA, RnfB, RnfC, RnfD, RnfE and RnfG.

The protein resides in the cell membrane. It catalyses the reaction 2 reduced [2Fe-2S]-[ferredoxin] + Na(+)(in) + NAD(+) + H(+) = 2 oxidized [2Fe-2S]-[ferredoxin] + Na(+)(out) + NADH. Functionally, part of a membrane-bound complex that couples electron transfer with translocation of ions across the membrane. Couples electron transfer from reduced ferredoxin to NAD(+) with electrogenic movement of Na(+) out of the cell. Involved in caffeate respiration. The protein is Na(+)-translocating ferredoxin:NAD(+) oxidoreductase complex subunit A of Acetobacterium woodii (strain ATCC 29683 / DSM 1030 / JCM 2381 / KCTC 1655 / WB1).